The chain runs to 285 residues: Glutamate racemase (285 aa).

Substrate is bound by residues 28–29 (DS) and 60–61 (YG). Cys92 acts as the Proton donor/acceptor in catalysis. 93–94 (NT) is a substrate binding site. The active-site Proton donor/acceptor is the Cys204. Substrate is bound at residue 205–206 (TH).

Belongs to the aspartate/glutamate racemases family.

It catalyses the reaction L-glutamate = D-glutamate. It participates in cell wall biogenesis; peptidoglycan biosynthesis. In terms of biological role, provides the (R)-glutamate required for cell wall biosynthesis. The sequence is that of Glutamate racemase from Shigella flexneri serotype 5b (strain 8401).